Here is a 701-residue protein sequence, read N- to C-terminus: C6 finger domain transcription factor nscR (701 aa).

The zn(2)-C6 fungal-type DNA-binding region spans 17–43 (CELCRERKVKCDKLDPCTNCASAGVVC).

The protein localises to the nucleus. Its function is as follows. Transcription factor that specifically regulates the neosartoricin B biosynthesis gene cluster. The sequence is that of C6 finger domain transcription factor nscR from Arthroderma gypseum (strain ATCC MYA-4604 / CBS 118893) (Microsporum gypseum).